The sequence spans 697 residues: MSDMSGDVVEHPKLLFDRPNEPLITPKGDNKAVFQLSEKLVPPEYANNGVELNDRFGDDATEKIPLKTLDSYPAFTKASQLPSDADFSLLLPKHQEMATEVIDAFMNVPLNQLQDFLSTCVYARANLNPQLFNYCYSVALMHRDDTKNVPIQNFAETFPSKFMDSQVFQRAREVTAVLPQNVPRIPIIIPRDYTATDLEEEHRLAYWREDIGVNLHHWHWHLVYPFTASQRSIVAKDRRGELFFHMHQQLIARYNCERLNHSLKRVKKFSNWREPIPEAYFPKLDSLTSARGWPPRQANMYWQDLNRPVDGLNITINDMERWRRNVEEAISTGRVTKADGSSAELDIDTLGNMLEASILSPNRELYGSIHNNGHSFAAYMHDPTHRYLESFGVIADEATTMRDPFFYRWHAWIDDTCQRHKESAYVRPYTRSELENPGVQVTSVSVETAGGQPNTLNTFWMSSDVDLSKGLDFSDRGAVYARFTYLNNRPFRYVININNTGSARRTTVRIFMAPKFDERNLVWSLADQRKMFIEMDRFVQPLNAGQNTITRNSTDSSVTIPFEQTFRDLSPQGSDPRRTSLAEFNFCGCGWPQHMLVPKGTEAGAAYQLFVMLSNYDLDSVDQPGGNQLSCVEASSFCGLKDKKYPDRRSMGFPFDRPSSIATNIEDFILPNMALQDITIRLSNVVEQNPRNPPSAV.

A propeptide spans 1–101 (MSDMSGDVVE…PKHQEMATEV (101 aa)) (removed by PPAE1). 3 residues coordinate Cu cation: His217, His221, and His247. N-linked (GlcNAc...) asparagine glycans are attached at residues Asn260 and Asn313. Catalysis depends on Glu355, which acts as the Proton acceptor. Cu cation contacts are provided by His370, His374, and His410. Asn498 and Asn552 each carry an N-linked (GlcNAc...) asparagine glycan. 2 disulfide bridges follow: Cys587–Cys631 and Cys589–Cys638.

Belongs to the tyrosinase family. In terms of assembly, heterodimer. Cu(2+) serves as cofactor. Activated by the cleavage of the N-terminal propeptide by PPAE1. Expressed in hemocytes.

It is found in the secreted. The catalysed reaction is L-tyrosine + O2 = L-dopaquinone + H2O. It carries out the reaction 2 L-dopa + O2 = 2 L-dopaquinone + 2 H2O. With respect to regulation, activated by a cationic detergent cetyl pyridinium chloride (CPC). Inhibited by phenyl thio-urea (PTU). In terms of biological role, this is a copper-containing oxidase that functions in the formation of pigments such as melanins and other polyphenolic compounds. Catalyzes the rate-limiting conversions of tyrosine to DOPA, DOPA to DOPA-quinone and possibly 5,6 dihydroxyindole to indole-5'6 quinone. Catalyzes the oxidation of 4-methylcatechol. Binds to the surface of hemocytes and is involved in hemocyte melanization. The protein is Phenoloxidase 1 of Spodoptera litura (Asian cotton leafworm).